The chain runs to 198 residues: Large ribosomal subunit protein bL9 (198 aa).

This sequence belongs to the bacterial ribosomal protein bL9 family.

Functionally, binds to the 23S rRNA. This Bartonella tribocorum (strain CIP 105476 / IBS 506) protein is Large ribosomal subunit protein bL9.